The primary structure comprises 822 residues: Molybdenum cofactor sulfurase (822 aa).

An N6-(pyridoxal phosphate)lysine modification is found at K245. Residue C412 is part of the active site. The region spanning L658–I814 is the MOSC domain.

The protein belongs to the class-V pyridoxal-phosphate-dependent aminotransferase family. MOCOS subfamily. The cofactor is pyridoxal 5'-phosphate.

The enzyme catalyses Mo-molybdopterin + L-cysteine + AH2 = thio-Mo-molybdopterin + L-alanine + A + H2O. Its pathway is cofactor biosynthesis; molybdopterin biosynthesis. Its function is as follows. Sulfurates the molybdenum cofactor. Sulfation of molybdenum is essential for xanthine dehydrogenase (XDH) and aldehyde oxidase (ADO) enzymes in which molybdenum cofactor is liganded by 1 oxygen and 1 sulfur atom in active form. The chain is Molybdenum cofactor sulfurase from Bombyx mori (Silk moth).